Here is a 664-residue protein sequence, read N- to C-terminus: Transketolase 1 (664 aa).

A substrate-binding site is contributed by His26. Residues His66 and 114–116 each bind thiamine diphosphate; that span reads GPL. Residue Asp155 participates in Mg(2+) binding. Residues Gly156 and Asn185 each contribute to the thiamine diphosphate site. The Mg(2+) site is built by Asn185 and Ile187. Residues His260, Arg357, and Ser384 each coordinate substrate. Thiamine diphosphate is bound at residue His260. Residue Glu411 is the Proton donor of the active site. A thiamine diphosphate-binding site is contributed by Phe437. His461, Asp469, and Arg520 together coordinate substrate.

Belongs to the transketolase family. As to quaternary structure, homodimer. It depends on Mg(2+) as a cofactor. The cofactor is Ca(2+). Requires Mn(2+) as cofactor. Co(2+) is required as a cofactor. Thiamine diphosphate serves as cofactor.

It catalyses the reaction D-sedoheptulose 7-phosphate + D-glyceraldehyde 3-phosphate = aldehydo-D-ribose 5-phosphate + D-xylulose 5-phosphate. Functionally, catalyzes the transfer of a two-carbon ketol group from a ketose donor to an aldose acceptor, via a covalent intermediate with the cofactor thiamine pyrophosphate. The polypeptide is Transketolase 1 (tkt1) (Vibrio vulnificus (strain CMCP6)).